A 469-amino-acid polypeptide reads, in one-letter code: 3-isopropylmalate dehydratase large subunit (469 aa).

Positions 350, 410, and 413 each coordinate [4Fe-4S] cluster.

Belongs to the aconitase/IPM isomerase family. LeuC type 1 subfamily. As to quaternary structure, heterodimer of LeuC and LeuD. [4Fe-4S] cluster is required as a cofactor.

The catalysed reaction is (2R,3S)-3-isopropylmalate = (2S)-2-isopropylmalate. It participates in amino-acid biosynthesis; L-leucine biosynthesis; L-leucine from 3-methyl-2-oxobutanoate: step 2/4. Its function is as follows. Catalyzes the isomerization between 2-isopropylmalate and 3-isopropylmalate, via the formation of 2-isopropylmaleate. This chain is 3-isopropylmalate dehydratase large subunit, found in Allorhizobium ampelinum (strain ATCC BAA-846 / DSM 112012 / S4) (Agrobacterium vitis (strain S4)).